We begin with the raw amino-acid sequence, 606 residues long: MSDSKMDKLARMAPLPRTPLLTIWLAINMALIAQETGHKRIHTVQAATGGGSMLGDVNISAILDSFSVSYDKRVRPNYGGPPVEVGVTMYVLSISSLSEVKMDFTLDFYFRQFWTDPRLAYRKRPGVETLSVGSEFIKNIWVPDTFFVNEKQSYFHIATTSNEFIRVHHSGSITRSIRLTITASCPMNLQYFPMDRQLCHIEIESFGYTMRDIRYKWNEGPNSVGVSSEVSLPQFKVLGHRQRAMEISLTTGNYSRLACEIQFVRSMGYYLIQIYIPSGLIVVISWVSFWLNRNATPARVALGVTTVLTMTTLMSSTNAALPKISYVKSIDVYLGTCFVMVFASLLEYATVGYMAKRIQMRKQRFMAIQKIAEQKKQQLDGANQQQANPNPNANVGGPGGVGVGPGGPGGPGGGVNVGVGMGMGPEHGHGHGHHAHSHGHPHAPKQTVSNRPIGFSNIQQNVGTRGCSIVGPLFQEVRFKVHDPKAHSKGGTLENTVNGGRGGPQSHGPGPGQGGGPPGGGGGGGGGGGPPEGGGDPEAAVPAHLLHPGKVKKDINKLLGITPSDIDKYSRIVFPVCFVCFNLMYWIIYLHVSDVVADDLVLLGEE.

The first 44 residues, 1–44 (MSDSKMDKLARMAPLPRTPLLTIWLAINMALIAQETGHKRIHTV), serve as a signal peptide directing secretion. Topologically, residues 45–268 (QAATGGGSML…CEIQFVRSMG (224 aa)) are extracellular. The N-linked (GlcNAc...) asparagine glycan is linked to Asn58. Residues Cys185 and Cys199 are joined by a disulfide bond. Asn253 carries N-linked (GlcNAc...) asparagine glycosylation. The next 3 membrane-spanning stretches (helical) occupy residues 269–291 (YYLIQIYIPSGLIVVISWVSFWL), 297–316 (PARVALGVTTVLTMTTLMSS), and 333–356 (YLGTCFVMVFASLLEYATVGYMAK). Topologically, residues 357 to 568 (RIQMRKQRFM…LGITPSDIDK (212 aa)) are cytoplasmic. Disordered regions lie at residues 376–451 (KQQL…VSNR) and 482–542 (HDPK…AAVP). A compositionally biased stretch (low complexity) spans 381-395 (GANQQQANPNPNANV). Gly residues predominate over residues 396–425 (GGPGGVGVGPGGPGGPGGGVNVGVGMGMGP). Positions 430–443 (GHGHHAHSHGHPHA) are enriched in basic residues. The segment covering 499 to 536 (GGRGGPQSHGPGPGQGGGPPGGGGGGGGGGGPPEGGGD) has biased composition (gly residues). A helical membrane pass occupies residues 569 to 590 (YSRIVFPVCFVCFNLMYWIIYL).

The protein belongs to the ligand-gated ion channel (TC 1.A.9) family. Gamma-aminobutyric acid receptor (TC 1.A.9.5) subfamily.

The protein resides in the postsynaptic cell membrane. The protein localises to the cell membrane. In terms of biological role, GABA, an inhibitory neurotransmitter, mediates neuronal inhibition by binding to the GABA receptor and opening an integral chloride channel. This chain is Gamma-aminobutyric acid receptor subunit beta (Rdl), found in Drosophila simulans (Fruit fly).